A 695-amino-acid polypeptide reads, in one-letter code: Calcium-dependent serine proteinase (695 aa).

An N-terminal signal peptide occupies residues 1-21 (MGKSSEAWCIVLFSVFASFSA). In terms of domain architecture, CUB 1 spans 22–136 (EPTMHGEILS…TGFAAYYAAI (115 aa)). Disulfide bonds link C71/C89, C141/C153, C149/C162, and C164/C177. Positions 137-178 (DVNECTDFTDVPCSHFCNNFIGGYFCSCPPEYFLHDDMRNCG) constitute an EGF-like; calcium-binding domain. Position 155 is a (3R)-3-hydroxyasparagine (N155). A glycan (N-linked (GlcNAc...) asparagine) is linked at N180. Intrachain disulfides connect C181-C208, C240-C257, C300-C347, C327-C360, C365-C410, and C392-C428. Positions 181–296 (CSGNVFTALI…KGWKLRYHGD (116 aa)) constitute a CUB 2 domain. 2 Sushi domains span residues 298-362 (IPCP…RCQP) and 363-430 (VDCG…KCVP). N-linked (GlcNAc...) asparagine glycosylation occurs at N413. Residues 445–687 (IFGGFPAKIQ…YKDWILQTMQ (243 aa)) form the Peptidase S1 domain. Residues H482 and D536 each act as charge relay system in the active site. Intrachain disulfides connect C602–C625 and C634–C666. S638 (charge relay system) is an active-site residue.

Belongs to the peptidase S1 family. As to quaternary structure, heterodimer, consisting of heavy and light chains with disulfide bonds. The heavy chain is expected to be a regulatory subunit and the light chain contains the catalytic site. Post-translationally, the iron and 2-oxoglutarate dependent 3-hydroxylation of aspartate and asparagine is (R) stereospecific within EGF domains.

It localises to the secreted. It is found in the extracellular space. The protein localises to the extracellular matrix. Functionally, capable of degrading extracellular matrix proteins. CASP degrades type I and IV collagen and fibronectin in the presence of calcium. The chain is Calcium-dependent serine proteinase from Mesocricetus auratus (Golden hamster).